We begin with the raw amino-acid sequence, 33 residues long: Protamine-M6/M7 (33 aa).

The disordered stretch occupies residues 1–33 (PRRRRETSRPIRRRRRARRAPIRRRRRVVRRRR).

In terms of tissue distribution, testis.

Its subcellular location is the nucleus. The protein localises to the chromosome. Its function is as follows. Protamines substitute for histones in the chromatin of sperm during the haploid phase of spermatogenesis. They compact sperm DNA into a highly condensed, stable and inactive complex. In Mugil cephalus (Flathead mullet), this protein is Protamine-M6/M7.